The sequence spans 347 residues: Inositol 2-dehydrogenase (347 aa).

Belongs to the Gfo/Idh/MocA family. As to quaternary structure, homotetramer.

The enzyme catalyses myo-inositol + NAD(+) = scyllo-inosose + NADH + H(+). Functionally, involved in the oxidation of myo-inositol (MI) to 2-keto-myo-inositol (2KMI or 2-inosose). The sequence is that of Inositol 2-dehydrogenase from Rubrobacter xylanophilus (strain DSM 9941 / JCM 11954 / NBRC 16129 / PRD-1).